A 567-amino-acid polypeptide reads, in one-letter code: Synaptotagmin-like protein 1 (567 aa).

Residues 31-87 form the RabBD domain; the sequence is LLDLSFLTEEEQEAISDVLKRDAHLRQLEEGRVSKLRASLEDPWQLKILTGDWFQEA. Positions 103-255 are disordered; that stretch reads RASIRRKKSP…VSSLNSSTLS (153 aa). Ser120 carries the phosphoserine modification. Composition is skewed to acidic residues over residues 122–135 and 170–184; these read GEAE…IEGE and GQEE…ELEA. Residues 208-219 are compositionally biased toward polar residues; that stretch reads ESQPTPAQSKAT. At Ser220 the chain carries Phosphoserine. Positions 235 to 255 are enriched in low complexity; it reads SLDRMLSSSSSVSSLNSSTLS. 2 C2 domains span residues 271–390 and 403–532; these read VRGS…WLPL and SRGL…VPWM.

Monomer. Binds NCF2 and NRXN1. Binds RAB27A that has been activated by GTP-binding via its N-terminus. Highly expressed in lung. Detected at lower levels in spleen, liver and kidney, and at very low levels in heart, brain and skeletal muscle. Expressed in cytotoxic T-lymphocytes (CTL).

The protein resides in the endomembrane system. The protein localises to the cell membrane. Its function is as follows. Binds phosphatidylinositol 3,4,5-trisphosphate. May play a role in vesicle trafficking. Acts as a RAB27A effector protein and may play a role in cytotoxic granule exocytosis in lymphocytes. In Mus musculus (Mouse), this protein is Synaptotagmin-like protein 1 (Sytl1).